Reading from the N-terminus, the 320-residue chain is Delta(7)-sterol 5(6)-desaturase erg3C (320 aa).

A run of 3 helical transmembrane segments spans residues 43–63 (VISILVLTQLGATSLYLFFSA), 91–111 (SSLSAIPFINILTLPWFLAEV), and 127–147 (PWLVVSSILYMAFNDIGIYWI). The Fatty acid hydroxylase domain maps to 134–283 (ILYMAFNDIG…FTWADAYFGS (150 aa)). The Histidine box-1 signature appears at 148 to 152 (HRLEH). The Histidine box-2 motif lies at 161-165 (HKPHH). A helical membrane pass occupies residues 224-244 (YMVLFAAVQIWTILIHDGDMI). Residues 259–263 (HTLHH) carry the Histidine box-3 motif.

It belongs to the sterol desaturase family. The cofactor is Fe cation.

The protein localises to the endoplasmic reticulum membrane. In terms of biological role, delta(7)-sterol 5(6)-desaturase; part of the third module of ergosterol biosynthesis pathway that includes the late steps of the pathway. Erg3C is a minor delta(7)-sterol 5(6)-desaturase within the ergosterol pathway, erg3B being the major one. The third module or late pathway involves the ergosterol synthesis itself through consecutive reactions that mainly occur in the endoplasmic reticulum (ER) membrane. Firstly, the squalene synthase erg9 catalyzes the condensation of 2 farnesyl pyrophosphate moieties to form squalene, which is the precursor of all steroids. Squalene synthase is crucial for balancing the incorporation of farnesyl diphosphate (FPP) into sterol and nonsterol isoprene synthesis. Secondly, squalene is converted into lanosterol by the consecutive action of the squalene epoxidase erg1 and the lanosterol synthase erg7. Then, the delta(24)-sterol C-methyltransferase erg6 methylates lanosterol at C-24 to produce eburicol. Eburicol is the substrate of the sterol 14-alpha demethylase encoded by cyp51A and cyp51B, to yield 4,4,24-trimethyl ergosta-8,14,24(28)-trienol. The C-14 reductase erg24 then reduces the C14=C15 double bond which leads to 4,4-dimethylfecosterol. A sequence of further demethylations at C-4, involving the C-4 demethylation complex containing the C-4 methylsterol oxidases erg25A or erg25B, the sterol-4-alpha-carboxylate 3-dehydrogenase erg26 and the 3-keto-steroid reductase erg27, leads to the production of fecosterol via 4-methylfecosterol. The C-8 sterol isomerase erg2 then catalyzes the reaction which results in unsaturation at C-7 in the B ring of sterols and thus converts fecosterol to episterol. The sterol-C5-desaturase erg3B then catalyzes the introduction of a C-5 double bond in the B ring to produce 5-dehydroepisterol. The 2 other sterol-C5-desaturases, erg3A and erg3C, seem to be less important in ergosterol biosynthesis. The C-22 sterol desaturase erg5 further converts 5-dehydroepisterol into ergosta-5,7,22,24(28)-tetraen-3beta-ol by forming the C-22(23) double bond in the sterol side chain. Finally, ergosta-5,7,22,24(28)-tetraen-3beta-ol is substrate of the C-24(28) sterol reductases erg4A and erg4B to produce ergosterol. Possible alternative sterol biosynthetic pathways might exist from fecosterol to ergosterol, depending on the activities of the erg3 isoforms. This Aspergillus fumigatus (strain ATCC MYA-4609 / CBS 101355 / FGSC A1100 / Af293) (Neosartorya fumigata) protein is Delta(7)-sterol 5(6)-desaturase erg3C.